A 424-amino-acid chain; its full sequence is Nuclear hormone receptor family member nhr-55 (424 aa).

Positions 1 to 19 (MNSPSSSSSFCSSSSSPSS) are enriched in low complexity. Residues 1–20 (MNSPSSSSSFCSSSSSPSSL) form a disordered region. A DNA-binding region (nuclear receptor) is located at residues 25–100 (PDTCQVCGQK…VGMTIENFQF (76 aa)). 2 consecutive NR C4-type zinc fingers follow at residues 28–55 (CQVC…FRRC) and 64–88 (CRRN…LKKC). The region spanning 169–424 (EVPLHTPNAL…FSHPEVFIDL (256 aa)) is the NR LBD domain.

This sequence belongs to the nuclear hormone receptor family.

Its subcellular location is the nucleus. Functionally, orphan nuclear receptor. The chain is Nuclear hormone receptor family member nhr-55 (nhr-55) from Caenorhabditis elegans.